A 250-amino-acid chain; its full sequence is Carboxy-S-adenosyl-L-methionine synthase (250 aa).

Residues tyrosine 45, 70–72 (GCS), 95–96 (DN), 123–124 (DI), asparagine 138, and arginine 205 each bind S-adenosyl-L-methionine.

Belongs to the class I-like SAM-binding methyltransferase superfamily. Cx-SAM synthase family. In terms of assembly, homodimer.

It catalyses the reaction prephenate + S-adenosyl-L-methionine = carboxy-S-adenosyl-L-methionine + 3-phenylpyruvate + H2O. In terms of biological role, catalyzes the conversion of S-adenosyl-L-methionine (SAM) to carboxy-S-adenosyl-L-methionine (Cx-SAM). The protein is Carboxy-S-adenosyl-L-methionine synthase of Marinobacter nauticus (strain ATCC 700491 / DSM 11845 / VT8) (Marinobacter aquaeolei).